Reading from the N-terminus, the 735-residue chain is Stonin-1 (735 aa).

The segment at 1-35 is disordered; the sequence is MCSTNPGKWVTFDDDPAVQSSQKSKNFPLENQGVC. The SHD domain maps to 275 to 408; the sequence is GWSFMLRIPE…KLPAVSKPKK (134 aa). Residues 412 to 715 enclose the MHD domain; sequence EQEISLEIVD…ACYNIQVEIE (304 aa).

This sequence belongs to the Stoned B family. As to expression, ubiquitous.

It is found in the cytoplasm. It localises to the membrane. Functionally, may be involved in the endocytic machinery. The sequence is that of Stonin-1 (STON1) from Homo sapiens (Human).